A 424-amino-acid chain; its full sequence is Gamma-glutamyl phosphate reductase (424 aa).

It belongs to the gamma-glutamyl phosphate reductase family.

The protein resides in the cytoplasm. It carries out the reaction L-glutamate 5-semialdehyde + phosphate + NADP(+) = L-glutamyl 5-phosphate + NADPH + H(+). The protein operates within amino-acid biosynthesis; L-proline biosynthesis; L-glutamate 5-semialdehyde from L-glutamate: step 2/2. Its function is as follows. Catalyzes the NADPH-dependent reduction of L-glutamate 5-phosphate into L-glutamate 5-semialdehyde and phosphate. The product spontaneously undergoes cyclization to form 1-pyrroline-5-carboxylate. This chain is Gamma-glutamyl phosphate reductase, found in Halorhodospira halophila (strain DSM 244 / SL1) (Ectothiorhodospira halophila (strain DSM 244 / SL1)).